A 202-amino-acid chain; its full sequence is FMN-dependent NADH:quinone oxidoreductase (202 aa).

Residues Ser-9 and Met-95–Phe-98 each bind FMN.

This sequence belongs to the azoreductase type 1 family. In terms of assembly, homodimer. FMN is required as a cofactor.

The enzyme catalyses 2 a quinone + NADH + H(+) = 2 a 1,4-benzosemiquinone + NAD(+). The catalysed reaction is N,N-dimethyl-1,4-phenylenediamine + anthranilate + 2 NAD(+) = 2-(4-dimethylaminophenyl)diazenylbenzoate + 2 NADH + 2 H(+). Functionally, quinone reductase that provides resistance to thiol-specific stress caused by electrophilic quinones. Its function is as follows. Also exhibits azoreductase activity. Catalyzes the reductive cleavage of the azo bond in aromatic azo compounds to the corresponding amines. The protein is FMN-dependent NADH:quinone oxidoreductase of Chromobacterium violaceum (strain ATCC 12472 / DSM 30191 / JCM 1249 / CCUG 213 / NBRC 12614 / NCIMB 9131 / NCTC 9757 / MK).